The chain runs to 183 residues: Large ribosomal subunit protein uL6 (183 aa).

It belongs to the universal ribosomal protein uL6 family. Part of the 50S ribosomal subunit.

Its function is as follows. This protein binds to the 23S rRNA, and is important in its secondary structure. It is located near the subunit interface in the base of the L7/L12 stalk, and near the tRNA binding site of the peptidyltransferase center. The protein is Large ribosomal subunit protein uL6 of Moorella thermoacetica (strain ATCC 39073 / JCM 9320).